A 424-amino-acid polypeptide reads, in one-letter code: Carbohydrate sulfotransferase 8 (424 aa).

The Cytoplasmic segment spans residues 1 to 10 (MTLRPGTMRL). The chain crosses the membrane as a helical; Signal-anchor for type II membrane protein span at residues 11–31 (ACMFSSILLFGAAGLLLFISL). Residues 32-424 (QDPTELAPQQ…NYSKPFADLY (393 aa)) are Lumenal-facing. The tract at residues 47–107 (FNIRPRQPHH…PLQRGTRLRL (61 aa)) is disordered. The span at 66–77 (GDLKEPTERVTR) shows a compositional bias: basic and acidic residues. N128 is a glycosylation site (N-linked (GlcNAc...) asparagine). Residues 198–204 (PKAGCSN) and 258–266 (REPFERLVS) each bind 3'-phosphoadenylyl sulfate. Residues N294, N367, and N415 are each glycosylated (N-linked (GlcNAc...) asparagine).

Belongs to the sulfotransferase 2 family. As to expression, predominantly expressed in pituitary gland. In brain, it is expressed in pituitary gland, cerebellum, medulla oblongata, pons, thalamus and spinal cord. Expressed in the epidermis. Expressed at lower level in lung, spleen, adrenal gland, placenta, prostate, testis, mammary gland and trachea.

The protein resides in the golgi apparatus membrane. In terms of biological role, catalyzes the transfer of sulfate to position 4 of non-reducing N-acetylgalactosamine (GalNAc) residues in both N-glycans and O-glycans. Required for biosynthesis of glycoprotein hormones lutropin and thyrotropin, by mediating sulfation of their carbohydrate structures. Only active against terminal GalNAcbeta1,GalNAcbeta. Not active toward chondroitin. This Homo sapiens (Human) protein is Carbohydrate sulfotransferase 8 (CHST8).